A 223-amino-acid chain; its full sequence is Immediate early response gene 2 protein (223 aa).

Methionine 1 bears the N-acetylmethionine mark. The segment at 63 to 172 is disordered; sequence AALPSDPRLH…PPAQAEGAFP (110 aa). Basic and acidic residues predominate over residues 69–78; that stretch reads PRLHPPREAE. Low complexity predominate over residues 125–138; the sequence is SSLSDGGDAGLVPS.

This sequence belongs to the IER family. In terms of tissue distribution, expressed in activated T-cells (at protein level). Expression increases in metastatic tumor cells (at protein level).

Its subcellular location is the cytoplasm. The protein localises to the nucleus. DNA-binding protein that seems to act as a transcription factor. Involved in the regulation of neuronal differentiation, acts upon JNK-signaling pathway activation and plays a role in neurite outgrowth in hippocampal cells. May mediate with FIBP FGF-signaling in the establishment of laterality in the embryo. Promotes cell motility, seems to stimulate tumor metastasis. The chain is Immediate early response gene 2 protein from Homo sapiens (Human).